The primary structure comprises 211 residues: FMN-dependent NADH:quinone oxidoreductase (211 aa).

FMN-binding positions include S10, 16-18, and 138-141; these read STS and TQGG.

This sequence belongs to the azoreductase type 1 family. As to quaternary structure, homodimer. FMN is required as a cofactor.

It carries out the reaction 2 a quinone + NADH + H(+) = 2 a 1,4-benzosemiquinone + NAD(+). It catalyses the reaction N,N-dimethyl-1,4-phenylenediamine + anthranilate + 2 NAD(+) = 2-(4-dimethylaminophenyl)diazenylbenzoate + 2 NADH + 2 H(+). In terms of biological role, quinone reductase that provides resistance to thiol-specific stress caused by electrophilic quinones. Its function is as follows. Also exhibits azoreductase activity. Catalyzes the reductive cleavage of the azo bond in aromatic azo compounds to the corresponding amines. The protein is FMN-dependent NADH:quinone oxidoreductase of Frankia alni (strain DSM 45986 / CECT 9034 / ACN14a).